The chain runs to 145 residues: Conglutin (145 aa).

Positions 1-21 (MAKSTILVALLALVLVAHASA) are cleaved as a signal peptide. Disulfide bonds link Cys35–Cys92, Cys47–Cys79, Cys80–Cys128, Cys94–Cys136, and Cys105–Cys145.

Belongs to the 2S seed storage albumins family. Expressed in seeds. Not expressed in roots, pegs (budding ovaries) or leaves.

This is Conglutin from Arachis hypogaea (Peanut).